Consider the following 69-residue polypeptide: Large ribosomal subunit protein bL28 (69 aa).

The segment at 1–27 (MSRRCSVSGKGPLVGNNVSHANNKTKR) is disordered.

This sequence belongs to the bacterial ribosomal protein bL28 family.

The sequence is that of Large ribosomal subunit protein bL28 from Sulfurovum sp. (strain NBC37-1).